The primary structure comprises 325 residues: MIDDLIIILIKSAVVILLLFTAAAYMTFLERIVMARLQLRMGPVRVGPFGLFQPLADGIKLLCKERFQPANVETFVYWLAPGISLFTALFIFVLIPFGGVVEIAGRLIYLQIADINVGVVFLLAFSSLAVYGVVLAGWASNNRYSLIGGLRGTAQMISYEIPMGLSLLTVVLSTGTLSLREIVELQQNHWLIWTNPISFIIYFITSFAETNRAPFDLPEAEQELTAGYHTEYGGMKFAAFFLGEYINILAVSAIATTLFFGGWHGPGDIPILWFGLKVAIFVFIFMWVRATMPRFRYDQLMSFGWKVLIPIAILNLIITAYFTLV.

The next 8 helical transmembrane spans lie at 5–25, 75–95, 117–137, 157–177, 190–210, 240–260, 268–288, and 305–325; these read LIIILIKSAVVILLLFTAAAY, FVYWLAPGISLFTALFIFVLI, VGVVFLLAFSSLAVYGVVLAG, ISYEIPMGLSLLTVVLSTGTL, WLIWTNPISFIIYFITSFAET, FFLGEYINILAVSAIATTLFF, DIPILWFGLKVAIFVFIFMWV, and WKVLIPIAILNLIITAYFTLV.

Belongs to the complex I subunit 1 family. In terms of assembly, NDH-1 is composed of 14 different subunits. Subunits NuoA, H, J, K, L, M, N constitute the membrane sector of the complex.

It localises to the cell inner membrane. The enzyme catalyses a quinone + NADH + 5 H(+)(in) = a quinol + NAD(+) + 4 H(+)(out). Its function is as follows. NDH-1 shuttles electrons from NADH, via FMN and iron-sulfur (Fe-S) centers, to quinones in the respiratory chain. The immediate electron acceptor for the enzyme in this species is believed to be ubiquinone. Couples the redox reaction to proton translocation (for every two electrons transferred, four hydrogen ions are translocated across the cytoplasmic membrane), and thus conserves the redox energy in a proton gradient. This subunit may bind ubiquinone. The protein is NADH-quinone oxidoreductase subunit H of Protochlamydia amoebophila (strain UWE25).